Reading from the N-terminus, the 66-residue chain is Large ribosomal subunit protein bL33c (66 aa).

The protein belongs to the bacterial ribosomal protein bL33 family.

It is found in the plastid. The protein localises to the chloroplast. The polypeptide is Large ribosomal subunit protein bL33c (Chloranthus spicatus (Chulantree)).